Here is a 493-residue protein sequence, read N- to C-terminus: Glutamyl-tRNA(Gln) amidotransferase subunit A (493 aa).

Catalysis depends on charge relay system residues Lys-78 and Ser-158. Ser-182 serves as the catalytic Acyl-ester intermediate.

The protein belongs to the amidase family. GatA subfamily. As to quaternary structure, heterotrimer of A, B and C subunits.

It carries out the reaction L-glutamyl-tRNA(Gln) + L-glutamine + ATP + H2O = L-glutaminyl-tRNA(Gln) + L-glutamate + ADP + phosphate + H(+). Functionally, allows the formation of correctly charged Gln-tRNA(Gln) through the transamidation of misacylated Glu-tRNA(Gln) in organisms which lack glutaminyl-tRNA synthetase. The reaction takes place in the presence of glutamine and ATP through an activated gamma-phospho-Glu-tRNA(Gln). This is Glutamyl-tRNA(Gln) amidotransferase subunit A from Methylorubrum extorquens (strain CM4 / NCIMB 13688) (Methylobacterium extorquens).